The chain runs to 512 residues: Endo-1,4-beta-xylanase A (512 aa).

A signal peptide spans 1–30 (MKRKVKKMAAMATSIIMAIMIILHSIPVLA). Residues 33–228 (IIYDNETGTH…SSGYANVYKN (196 aa)) enclose the GH11 domain. Glu124 acts as the Nucleophile in catalysis. Residue Glu215 is the Proton donor of the active site. CBM6 domains follow at residues 251–371 (SIIE…FIFS) and 388–508 (SIIQ…FVFS). Ca(2+) is bound by residues Glu254 and Glu256. Residue Thr271 participates in D-xylotriose binding. Arg276 provides a ligand contact to Ca(2+). Repeat unit 1 spans residues 279 to 340 (GYIENGNTVT…SSTGSWNTYQ (62 aa)). The segment at 279 to 477 (GYIENGNTVT…GSTGSFDTYR (199 aa)) is 2 X 61 AA approximate repeats. D-xylotriose contacts are provided by Tyr280, Asn337, and Asn364. The D-xylobiose site is built by Tyr280, Asn337, and Asn364. Positions 366, 391, 393, and 413 each coordinate Ca(2+). Residues 416-477 (GYIENGYSTT…GSTGSFDTYR (62 aa)) form repeat 2. Positions 417, 474, and 501 each coordinate D-xylotriose. Residue Asp503 participates in Ca(2+) binding.

Belongs to the glycosyl hydrolase 11 (cellulase G) family.

It catalyses the reaction Endohydrolysis of (1-&gt;4)-beta-D-xylosidic linkages in xylans.. It functions in the pathway glycan degradation; xylan degradation. The polypeptide is Endo-1,4-beta-xylanase A (xynA) (Thermoclostridium stercorarium (Clostridium stercorarium)).